A 272-amino-acid polypeptide reads, in one-letter code: Expansin-B16 (272 aa).

The first 25 residues, 1–25 (MAAFSSSSSAPMLIRSVLFVSLLSA), serve as a signal peptide directing secretion. The Expansin-like EG45 domain maps to 63–173 (GGACGYGTLV…RRTACKYGGK (111 aa)). 3 disulfide bridges follow: Cys-66–Cys-95, Cys-98–Cys-168, and Cys-103–Cys-109. An Expansin-like CBD domain is found at 186 to 267 (FWLSLLVEFE…NWTPKATYTS (82 aa)).

Belongs to the expansin family. Expansin B subfamily.

It localises to the secreted. It is found in the cell wall. The protein localises to the membrane. In terms of biological role, may cause loosening and extension of plant cell walls by disrupting non-covalent bonding between cellulose microfibrils and matrix glucans. No enzymatic activity has been found. May be required for rapid internodal elongation in deepwater rice during submergence. The sequence is that of Expansin-B16 (EXPB16) from Oryza sativa subsp. japonica (Rice).